The primary structure comprises 330 residues: Small ribosomal subunit protein uS15m (330 aa).

This sequence belongs to the universal ribosomal protein uS15 family. As to quaternary structure, component of the mitochondrial ribosome small subunit (28S) which comprises a 12S rRNA and about 30 distinct proteins.

The protein localises to the mitochondrion. The protein is Small ribosomal subunit protein uS15m (mrps-15) of Caenorhabditis elegans.